The chain runs to 377 residues: Queuine tRNA-ribosyltransferase (377 aa).

Residue Asp-89 is the Proton acceptor of the active site. Substrate is bound by residues 89–93 (DSGGF), Asp-143, Gln-187, and Gly-214. An RNA binding region spans residues 245 to 251 (GVGKPED). The Nucleophile role is filled by Asp-264. The tract at residues 269–273 (TRNAR) is RNA binding; important for wobble base 34 recognition. Zn(2+)-binding residues include Cys-302, Cys-304, Cys-307, and His-333.

Belongs to the queuine tRNA-ribosyltransferase family. As to quaternary structure, homodimer. Within each dimer, one monomer is responsible for RNA recognition and catalysis, while the other monomer binds to the replacement base PreQ1. Zn(2+) serves as cofactor.

The enzyme catalyses 7-aminomethyl-7-carbaguanine + guanosine(34) in tRNA = 7-aminomethyl-7-carbaguanosine(34) in tRNA + guanine. Its pathway is tRNA modification; tRNA-queuosine biosynthesis. Functionally, catalyzes the base-exchange of a guanine (G) residue with the queuine precursor 7-aminomethyl-7-deazaguanine (PreQ1) at position 34 (anticodon wobble position) in tRNAs with GU(N) anticodons (tRNA-Asp, -Asn, -His and -Tyr). Catalysis occurs through a double-displacement mechanism. The nucleophile active site attacks the C1' of nucleotide 34 to detach the guanine base from the RNA, forming a covalent enzyme-RNA intermediate. The proton acceptor active site deprotonates the incoming PreQ1, allowing a nucleophilic attack on the C1' of the ribose to form the product. After dissociation, two additional enzymatic reactions on the tRNA convert PreQ1 to queuine (Q), resulting in the hypermodified nucleoside queuosine (7-(((4,5-cis-dihydroxy-2-cyclopenten-1-yl)amino)methyl)-7-deazaguanosine). In Shewanella halifaxensis (strain HAW-EB4), this protein is Queuine tRNA-ribosyltransferase.